We begin with the raw amino-acid sequence, 727 residues long: E3 SUMO-protein ligase pli1 (727 aa).

The SAP domain maps to 18-52 (ETGLIIPQLKDILRVFGLRLSGTKAELITRIKQLI). The region spanning 108–261 (YSRPFAPVVH…SVVVCFVKVY (154 aa)) is the PINIT domain. The segment at 290-371 (QDADIIATST…MQHILESTPS (82 aa)) adopts an SP-RING-type zinc-finger fold. The Zn(2+) site is built by Cys321, His323, Cys344, and Cys347. A phosphoserine mark is found at Ser395 and Ser396. Disordered regions lie at residues 408–558 (ELSD…TQHS) and 706–727 (QSNN…QSID). 2 stretches are compositionally biased toward polar residues: residues 417–435 (TMAN…THNS) and 459–494 (VATS…NRST). The span at 546–558 (SQQNNNNSNTQHS) shows a compositional bias: low complexity.

The protein belongs to the PIAS family. Interacts with hus5/ubc9.

It is found in the nucleus. It functions in the pathway protein modification; protein sumoylation. Functionally, acts as an E3 ligase mediating SUMO/Smt3 attachment to other proteins. Involved in the maintenance of the centromere and in telomere length. Regulates recombination, via extension sumoylation, particularly within the heterochromatin repeats. This chain is E3 SUMO-protein ligase pli1 (pli1), found in Schizosaccharomyces pombe (strain 972 / ATCC 24843) (Fission yeast).